The following is a 327-amino-acid chain: Lipoyl synthase (327 aa).

7 residues coordinate [4Fe-4S] cluster: Cys-72, Cys-77, Cys-83, Cys-98, Cys-102, Cys-105, and Ser-313. One can recognise a Radical SAM core domain in the interval 83–302 (CWSHGTATIM…RKVGLEKGFL (220 aa)).

It belongs to the radical SAM superfamily. Lipoyl synthase family. [4Fe-4S] cluster serves as cofactor.

It is found in the cytoplasm. It carries out the reaction [[Fe-S] cluster scaffold protein carrying a second [4Fe-4S](2+) cluster] + N(6)-octanoyl-L-lysyl-[protein] + 2 oxidized [2Fe-2S]-[ferredoxin] + 2 S-adenosyl-L-methionine + 4 H(+) = [[Fe-S] cluster scaffold protein] + N(6)-[(R)-dihydrolipoyl]-L-lysyl-[protein] + 4 Fe(3+) + 2 hydrogen sulfide + 2 5'-deoxyadenosine + 2 L-methionine + 2 reduced [2Fe-2S]-[ferredoxin]. It participates in protein modification; protein lipoylation via endogenous pathway; protein N(6)-(lipoyl)lysine from octanoyl-[acyl-carrier-protein]: step 2/2. Catalyzes the radical-mediated insertion of two sulfur atoms into the C-6 and C-8 positions of the octanoyl moiety bound to the lipoyl domains of lipoate-dependent enzymes, thereby converting the octanoylated domains into lipoylated derivatives. This is Lipoyl synthase from Francisella tularensis subsp. mediasiatica (strain FSC147).